Consider the following 1375-residue polypeptide: DNA-directed RNA polymerase subunit beta (1375 aa).

It belongs to the RNA polymerase beta chain family. As to quaternary structure, the RNAP catalytic core consists of 2 alpha, 1 beta, 1 beta' and 1 omega subunit. When a sigma factor is associated with the core the holoenzyme is formed, which can initiate transcription.

It carries out the reaction RNA(n) + a ribonucleoside 5'-triphosphate = RNA(n+1) + diphosphate. Its function is as follows. DNA-dependent RNA polymerase catalyzes the transcription of DNA into RNA using the four ribonucleoside triphosphates as substrates. This is DNA-directed RNA polymerase subunit beta from Malacoplasma penetrans (strain HF-2) (Mycoplasma penetrans).